The chain runs to 149 residues: Immunoglobulin kappa chain variable 6-17 (149 aa).

A signal peptide spans 1–29; sequence MHHTSMGIKMESQIQVFVFVFLWLSGVDG. 2 repeats span residues 26–35 and 38–47; these read GVDGDIVMTQ. Residues 42–64 form a framework-1 region; sequence DIVMTQSHKFMSTSVGDRVSITC. The segment at 65-75 is complementarity-determining-1; that stretch reads KASQDVSTTVA. The segment at 76 to 90 is framework-2; it reads WYQQKPGQSPKLLIY. The interval 91–97 is complementarity-determining-2; the sequence is SASYRYT. Positions 98 to 129 are framework-3; it reads GVPDRFTGSGSGTDFTFTISSVQAEDLAVYYC. The complementarity-determining-3 stretch occupies residues 130 to 138; it reads QQHYSTPPT. Residues 139-148 are framework-4; that stretch reads FGGGTKLEIK.

This chain is Immunoglobulin kappa chain variable 6-17, found in Mus musculus (Mouse).